A 458-amino-acid polypeptide reads, in one-letter code: UDP-N-acetylmuramate--L-alanine ligase (458 aa).

112-118 (GTHGKTT) serves as a coordination point for ATP.

This sequence belongs to the MurCDEF family.

Its subcellular location is the cytoplasm. It catalyses the reaction UDP-N-acetyl-alpha-D-muramate + L-alanine + ATP = UDP-N-acetyl-alpha-D-muramoyl-L-alanine + ADP + phosphate + H(+). It participates in cell wall biogenesis; peptidoglycan biosynthesis. Cell wall formation. This is UDP-N-acetylmuramate--L-alanine ligase from Geotalea daltonii (strain DSM 22248 / JCM 15807 / FRC-32) (Geobacter daltonii).